A 1172-amino-acid chain; its full sequence is Thrombospondin-2 (1172 aa).

The signal sequence occupies residues 1–18 (MLWALALLALGIGPRASA). The Laminin G-like domain maps to 19 to 215 (GDHVKDTSFD…LQNVHLVFAD (197 aa)). The heparin-binding stretch occupies residues 19 to 232 (GDHVKDTSFD…KKGCQHSQGA (214 aa)). Residues Asn151, Asn316, and Asn330 are each glycosylated (N-linked (GlcNAc...) asparagine). Positions 318–375 (SACVQEGRIFAENETWVVDSCTTCTCKKFKTVCHQITCSPATCANPSFVEGECCPSCS) constitute a VWFC domain. 3 consecutive TSP type-1 domains span residues 381 to 431 (DEGW…GKCD), 437 to 492 (NGGW…DPCP), and 494 to 549 (DGRW…RSCP). 27 disulfide bridges follow: Cys393–Cys425, Cys397–Cys430, Cys408–Cys415, Cys449–Cys486, Cys453–Cys491, Cys464–Cys476, Cys506–Cys543, Cys510–Cys548, Cys521–Cys533, Cys553–Cys564, Cys558–Cys574, Cys577–Cys588, Cys594–Cys610, Cys601–Cys619, Cys622–Cys646, Cys652–Cys665, Cys659–Cys678, Cys680–Cys691, Cys707–Cys715, Cys720–Cys740, Cys756–Cys776, Cys779–Cys799, Cys815–Cys835, Cys838–Cys858, Cys876–Cys896, Cys912–Cys932, and Cys948–Cys1169. Asn457 carries an N-linked (GlcNAc...) asparagine glycan. In terms of domain architecture, EGF-like 1 spans 549–589 (PIDGCLSNPCFPGAKCNSFPDGSWSCGSCPVGFLGNGTHCE). N-linked (GlcNAc...) asparagine glycosylation occurs at Asn584. The region spanning 648-692 (PENPCKDKTHSCHKNAECIYLGHFSDPMYKCECQIGYAGDGLICG) is the EGF-like 2 domain. TSP type-3 repeat units follow at residues 693–728 (EDSD…NSGQ), 729–764 (EDFD…NPRQ), 765–787 (LDYD…NPAQ), 788–823 (IDTD…NTDQ), 824–846 (RDTD…NPDQ), 847–884 (IDQD…NSNQ), 885–920 (ADHD…NPDQ), and 921–956 (EDSD…AITE). An N-linked (GlcNAc...) asparagine glycan is attached at Asn710. The interval 727–752 (GQEDFDKDGIGDACDEDDDNDGVSDE) is disordered. Positions 739–749 (ACDEDDDNDGV) are enriched in acidic residues. A disordered region spans residues 846-938 (QIDQDNDLVG…GDICKDDFDN (93 aa)). Residues 847-866 (IDQDNDLVGDQCDNNEDIDD) are compositionally biased toward acidic residues. Residues 870 to 884 (QNNQDNCPYISNSNQ) show a composition bias toward polar residues. Residues 885 to 895 (ADHDNDGKGDA) show a composition bias toward basic and acidic residues. The span at 896-905 (CDSDDDNDGV) shows a compositional bias: acidic residues. Residues 925–935 (GDGRGDICKDD) are compositionally biased toward basic and acidic residues. The Cell attachment site motif lies at 928–930 (RGD). The TSP C-terminal domain maps to 960–1172 (RNFQMVPLDP…SDLKYECRDA (213 aa)). N-linked (GlcNAc...) asparagine glycosylation is present at Asn1069.

It belongs to the thrombospondin family. In terms of assembly, homotrimer; disulfide-linked. Can bind to fibrinogen, fibronectin, laminin and type V collagen. Interacts (via the TSP type I repeats) with CD36; the interaction conveys an antiangiogenic effect. Interacts (via the TSP type I repeats) with HRG; the interaction blocks the antiangiogenic effect of THBS2 with CD36. Can bind to fibrinogen, fibronectin, laminin.

In terms of biological role, adhesive glycoprotein that mediates cell-to-cell and cell-to-matrix interactions. Ligand for CD36 mediating antiangiogenic properties. This chain is Thrombospondin-2 (Thbs2), found in Mus musculus (Mouse).